We begin with the raw amino-acid sequence, 224 residues long: Orotate phosphoribosyltransferase (224 aa).

Lys29 contributes to the 5-phospho-alpha-D-ribose 1-diphosphate binding site. Orotate is bound at residue 37–38 (FF). 5-phospho-alpha-D-ribose 1-diphosphate-binding positions include 75–76 (YK), Arg105, Lys106, Lys109, His111, and 130–138 (DDVITAGTS). Positions 134 and 162 each coordinate orotate.

It belongs to the purine/pyrimidine phosphoribosyltransferase family. PyrE subfamily. Homodimer. Requires Mg(2+) as cofactor.

It catalyses the reaction orotidine 5'-phosphate + diphosphate = orotate + 5-phospho-alpha-D-ribose 1-diphosphate. It participates in pyrimidine metabolism; UMP biosynthesis via de novo pathway; UMP from orotate: step 1/2. Functionally, catalyzes the transfer of a ribosyl phosphate group from 5-phosphoribose 1-diphosphate to orotate, leading to the formation of orotidine monophosphate (OMP). The protein is Orotate phosphoribosyltransferase of Bordetella bronchiseptica (strain ATCC BAA-588 / NCTC 13252 / RB50) (Alcaligenes bronchisepticus).